Here is a 28-residue protein sequence, read N- to C-terminus: Dermaseptin-1 (28 aa).

The residue at position 28 (glutamine 28) is a Glutamine amide.

In terms of tissue distribution, expressed by the skin glands.

It localises to the secreted. In terms of biological role, has antimicrobial activity. The polypeptide is Dermaseptin-1 (Phyllomedusa tomopterna (Tiger-striped leaf frog)).